The following is a 504-amino-acid chain: Glutamate--tRNA ligase (504 aa).

Positions 25–35 (PSPTGNPHVGL) match the 'HIGH' region motif. Zn(2+) is bound by residues C122, C124, C149, and E151. The short motif at 270 to 274 (KLSKR) is the 'KMSKS' region element. K273 provides a ligand contact to ATP.

The protein belongs to the class-I aminoacyl-tRNA synthetase family. Glutamate--tRNA ligase type 1 subfamily. As to quaternary structure, monomer. Zn(2+) serves as cofactor.

The protein localises to the cytoplasm. It catalyses the reaction tRNA(Glu) + L-glutamate + ATP = L-glutamyl-tRNA(Glu) + AMP + diphosphate. Catalyzes the attachment of glutamate to tRNA(Glu) in a two-step reaction: glutamate is first activated by ATP to form Glu-AMP and then transferred to the acceptor end of tRNA(Glu). This is Glutamate--tRNA ligase from Streptomyces avermitilis (strain ATCC 31267 / DSM 46492 / JCM 5070 / NBRC 14893 / NCIMB 12804 / NRRL 8165 / MA-4680).